Reading from the N-terminus, the 105-residue chain is MIKYVLISALLVVAVYSFTIEDNEDALLEEAEDELDTEEERRMALPPGAVCNGHKSDCQCFGAKYKCSCPFLWRFRRSAECHCKKGWAWTAIKKRSCHNRYQWSG.

A signal peptide spans 1–17 (MIKYVLISALLVVAVYS). Positions 18–41 (FTIEDNEDALLEEAEDELDTEEER) are excised as a propeptide. Disulfide bonds link Cys51-Cys67, Cys58-Cys97, Cys60-Cys83, and Cys69-Cys81.

Belongs to the neurotoxin 04 (omega-agtx) family. 01 (type I omega-agtx) subfamily. As to expression, expressed by the venom gland.

The protein resides in the secreted. Functionally, insecticidal to house crickets. It induces an excitatory slow-onset impact that leads to irreversible spastic paralysis. It also modifies human voltage-gated potassium channel Kv1.5/KCNA5. Most likely, it binds to the voltage-sensing domain of the channel, suggesting it does not block the pore but prevents its opening at physiological membrane potentials. The recombinant peptide binds to the channel in an irreversible manner and slows down the hKv1.5 current activation kinetics. It is not toxic to mice, when intracranially injected (at 0.5 ug/g mouse). The chain is U2-lycotoxin-Ls1b from Lycosa singoriensis (Wolf spider).